We begin with the raw amino-acid sequence, 185 residues long: ATP synthase subunit b, chloroplastic (185 aa).

The chain crosses the membrane as a helical span at residues 7–29 (SFVYLVGHCPFAGSFAFNTDILA).

The protein belongs to the ATPase B chain family. In terms of assembly, F-type ATPases have 2 components, F(1) - the catalytic core - and F(0) - the membrane proton channel. F(1) has five subunits: alpha(3), beta(3), gamma(1), delta(1), epsilon(1). F(0) has four main subunits: a(1), b(1), b'(1) and c(10-14). The alpha and beta chains form an alternating ring which encloses part of the gamma chain. F(1) is attached to F(0) by a central stalk formed by the gamma and epsilon chains, while a peripheral stalk is formed by the delta, b and b' chains.

Its subcellular location is the plastid. The protein resides in the chloroplast thylakoid membrane. F(1)F(0) ATP synthase produces ATP from ADP in the presence of a proton or sodium gradient. F-type ATPases consist of two structural domains, F(1) containing the extramembraneous catalytic core and F(0) containing the membrane proton channel, linked together by a central stalk and a peripheral stalk. During catalysis, ATP synthesis in the catalytic domain of F(1) is coupled via a rotary mechanism of the central stalk subunits to proton translocation. Functionally, component of the F(0) channel, it forms part of the peripheral stalk, linking F(1) to F(0). In Dioscorea elephantipes (Elephant's foot yam), this protein is ATP synthase subunit b, chloroplastic.